A 420-amino-acid polypeptide reads, in one-letter code: MTKWKRANPNGTRDYLFEECTLIEEVEQKLRRTFLERGYEEIRTPTIEFYDVFAFQSRPIDEEKMYKFFDEKGRIIVLRPDMTIPLARVIGTQRCDTPLKVTYSGNVFRANESLTGKYNEIVQSGIEIIGIDNVRAEIECVISVIQSLQKLKVQSFTIEIGQVQLYKCIVKKLSIHEEEEKVLRTYIESKNYAALSNFIREKNFDRCDETVRLLEKLPRLFGNLEVIEEAEKLASSNEMKMAIARVKEIYEAIDKLGYGSYISIDLGMIQHLDYYTGVIFKGYIYEIGEEIVSGGRYDELIGNFGEMLPAVGLAVQVNQIVKALQEQQEPYERKRIDIMIHYELNRLAEAERLRNLLQKDGKKVEISLCSNLNDTFQFARKNQIVTVVEAKNESLVEYVWNEKWVVQKEGETSCVTFKLR.

This sequence belongs to the class-II aminoacyl-tRNA synthetase family. HisZ subfamily. As to quaternary structure, heteromultimer composed of HisG and HisZ subunits.

The protein localises to the cytoplasm. It functions in the pathway amino-acid biosynthesis; L-histidine biosynthesis; L-histidine from 5-phospho-alpha-D-ribose 1-diphosphate: step 1/9. Functionally, required for the first step of histidine biosynthesis. May allow the feedback regulation of ATP phosphoribosyltransferase activity by histidine. This Bacillus cereus (strain ATCC 10987 / NRS 248) protein is ATP phosphoribosyltransferase regulatory subunit.